The sequence spans 479 residues: D-aminoacyl-tRNA deacylase (479 aa).

Belongs to the DtdA deacylase family. As to quaternary structure, monomer. It depends on Zn(2+) as a cofactor.

The enzyme catalyses a D-aminoacyl-tRNA + H2O = a tRNA + a D-alpha-amino acid + H(+). It catalyses the reaction glycyl-tRNA(Ala) + H2O = tRNA(Ala) + glycine + H(+). In terms of biological role, D-aminoacyl-tRNA deacylase with broad substrate specificity. By recycling D-aminoacyl-tRNA to D-amino acids and free tRNA molecules, this enzyme counteracts the toxicity associated with the formation of D-aminoacyl-tRNA entities in vivo. This chain is D-aminoacyl-tRNA deacylase, found in Methanococcoides burtonii (strain DSM 6242 / NBRC 107633 / OCM 468 / ACE-M).